We begin with the raw amino-acid sequence, 247 residues long: Adenosylcobinamide-GDP ribazoletransferase (247 aa).

5 helical membrane passes run 34–54, 59–79, 113–133, 138–158, and 194–214; these read IITF…VFMA, FGVP…TGGF, GGLA…ELAL, ILAS…LLMY, and VLLP…AIFI.

This sequence belongs to the CobS family. Mg(2+) is required as a cofactor.

The protein resides in the cell inner membrane. It catalyses the reaction alpha-ribazole + adenosylcob(III)inamide-GDP = adenosylcob(III)alamin + GMP + H(+). The catalysed reaction is alpha-ribazole 5'-phosphate + adenosylcob(III)inamide-GDP = adenosylcob(III)alamin 5'-phosphate + GMP + H(+). The protein operates within cofactor biosynthesis; adenosylcobalamin biosynthesis; adenosylcobalamin from cob(II)yrinate a,c-diamide: step 7/7. In terms of biological role, joins adenosylcobinamide-GDP and alpha-ribazole to generate adenosylcobalamin (Ado-cobalamin). Also synthesizes adenosylcobalamin 5'-phosphate from adenosylcobinamide-GDP and alpha-ribazole 5'-phosphate. The protein is Adenosylcobinamide-GDP ribazoletransferase of Escherichia coli O17:K52:H18 (strain UMN026 / ExPEC).